Here is a 347-residue protein sequence, read N- to C-terminus: NADH-ubiquinone oxidoreductase chain 2 (347 aa).

Helical transmembrane passes span 2-22 (SPYVLTIMSLSLLLGTTMTLI), 25-45 (HWLTAWMGLEINTLAVIPLMT), 56-76 (AIKYFMIQATASMIILFSAIF), 96-116 (FMMTIALAMKLGLAPFHFWVP), 122-142 (IPLLSGMILLTWQKIAPISIF), 149-169 (LNMSLLMILSITSTLLGGWGG), 178-197 (ILAYSSIAHMGWMTIIIMIY), 202-219 (ILNLILYLASTITMFMVL), 241-261 (MIIITLTLLSLGGLPPLTGFM), 278-298 (LAMMLALSTLLNLFFYMRIIY), and 323-343 (ILPIPTLTIISSLLLPMTPMF).

Belongs to the complex I subunit 2 family. As to quaternary structure, core subunit of respiratory chain NADH dehydrogenase (Complex I) which is composed of 45 different subunits. Interacts with TMEM242.

It is found in the mitochondrion inner membrane. The enzyme catalyses a ubiquinone + NADH + 5 H(+)(in) = a ubiquinol + NAD(+) + 4 H(+)(out). Functionally, core subunit of the mitochondrial membrane respiratory chain NADH dehydrogenase (Complex I) which catalyzes electron transfer from NADH through the respiratory chain, using ubiquinone as an electron acceptor. Essential for the catalytic activity and assembly of complex I. The protein is NADH-ubiquinone oxidoreductase chain 2 of Metachirus nudicaudatus (Brown four-eyed opossum).